The primary structure comprises 188 residues: Elongation factor P (188 aa).

This sequence belongs to the elongation factor P family.

It is found in the cytoplasm. The protein operates within protein biosynthesis; polypeptide chain elongation. In terms of biological role, involved in peptide bond synthesis. Stimulates efficient translation and peptide-bond synthesis on native or reconstituted 70S ribosomes in vitro. Probably functions indirectly by altering the affinity of the ribosome for aminoacyl-tRNA, thus increasing their reactivity as acceptors for peptidyl transferase. This is Elongation factor P from Chlorobium limicola (strain DSM 245 / NBRC 103803 / 6330).